Here is a 308-residue protein sequence, read N- to C-terminus: Zinc-binding protein TroA (308 aa).

Residues 1-22 (MIRERICACVLALGMLTGFTHA) form the signal peptide. Zn(2+) is bound by residues His-68, His-133, His-199, and Asp-279.

Belongs to the bacterial solute-binding protein 9 family. In terms of assembly, monomer.

Its subcellular location is the periplasm. Part of the ATP-binding cassette (ABC) transport system TroABC involved in zinc import. Binds zinc with high affinity and specificity and delivers it to the membrane permease for translocation into the cytoplasm. This Treponema pallidum (strain Nichols) protein is Zinc-binding protein TroA (troA).